The primary structure comprises 251 residues: Putative ATP-binding protein Rv3427c in insertion sequence (251 aa).

108-115 (GPVGVGKT) serves as a coordination point for ATP.

Belongs to the IS21/IS1162 putative ATP-binding protein family.

This chain is Putative ATP-binding protein Rv3427c in insertion sequence, found in Mycobacterium tuberculosis (strain ATCC 25618 / H37Rv).